We begin with the raw amino-acid sequence, 381 residues long: Queuine tRNA-ribosyltransferase (381 aa).

The Proton acceptor role is filled by Asp92. Substrate contacts are provided by residues 92 to 96 (DSGGF), Asp146, Gln190, and Gly217. Positions 248–254 (GVGRPED) are RNA binding. The Nucleophile role is filled by Asp267. The interval 272-276 (TRNAR) is RNA binding; important for wobble base 34 recognition. Cys305, Cys307, Cys310, and His337 together coordinate Zn(2+).

The protein belongs to the queuine tRNA-ribosyltransferase family. In terms of assembly, homodimer. Within each dimer, one monomer is responsible for RNA recognition and catalysis, while the other monomer binds to the replacement base PreQ1. Zn(2+) is required as a cofactor.

It catalyses the reaction 7-aminomethyl-7-carbaguanine + guanosine(34) in tRNA = 7-aminomethyl-7-carbaguanosine(34) in tRNA + guanine. It participates in tRNA modification; tRNA-queuosine biosynthesis. Functionally, catalyzes the base-exchange of a guanine (G) residue with the queuine precursor 7-aminomethyl-7-deazaguanine (PreQ1) at position 34 (anticodon wobble position) in tRNAs with GU(N) anticodons (tRNA-Asp, -Asn, -His and -Tyr). Catalysis occurs through a double-displacement mechanism. The nucleophile active site attacks the C1' of nucleotide 34 to detach the guanine base from the RNA, forming a covalent enzyme-RNA intermediate. The proton acceptor active site deprotonates the incoming PreQ1, allowing a nucleophilic attack on the C1' of the ribose to form the product. After dissociation, two additional enzymatic reactions on the tRNA convert PreQ1 to queuine (Q), resulting in the hypermodified nucleoside queuosine (7-(((4,5-cis-dihydroxy-2-cyclopenten-1-yl)amino)methyl)-7-deazaguanosine). In Xanthomonas campestris pv. campestris (strain B100), this protein is Queuine tRNA-ribosyltransferase.